The primary structure comprises 399 residues: Ectoine hydrolase (399 aa).

Belongs to the peptidase M24 family.

The protein resides in the cytoplasm. It carries out the reaction L-ectoine + H2O = (2S)-2-acetamido-4-aminobutanoate. In terms of biological role, involved in the degradation of ectoine, which allows H.elongata to utilize ectoine as both a carbon and a nitrogen source for growth. Catalyzes the hydrolysis of ectoine to N-acetyl-L-2,4-diaminobutyric acid (N-Ac-DABA). It can produce both isoforms N-gamma-acetyl-L-2,4-diaminobutyric acid (N-gamma-Ac-DABA) and N-alpha-acetyl-L-2,4-diaminobutyric acid (-Nalpha-Ac-DABA), however N-alpha-Ac-DABA is the essential substrate for the subsequent catabolic enzyme DoeB. The protein is Ectoine hydrolase of Halomonas elongata (strain ATCC 33173 / DSM 2581 / NBRC 15536 / NCIMB 2198 / 1H9).